The primary structure comprises 305 residues: uncharacterized protein (305 aa).

The protein belongs to the ADP-ribosylglycohydrolase family.

This is an uncharacterized protein from Archaeoglobus fulgidus (strain ATCC 49558 / DSM 4304 / JCM 9628 / NBRC 100126 / VC-16).